The following is a 159-amino-acid chain: Crossover junction endodeoxyribonuclease RuvC (159 aa).

Residues Asp7, Glu66, and Asp139 contribute to the active site. Positions 7, 66, and 139 each coordinate Mg(2+).

Belongs to the RuvC family. Homodimer which binds Holliday junction (HJ) DNA. The HJ becomes 2-fold symmetrical on binding to RuvC with unstacked arms; it has a different conformation from HJ DNA in complex with RuvA. In the full resolvosome a probable DNA-RuvA(4)-RuvB(12)-RuvC(2) complex forms which resolves the HJ. Mg(2+) is required as a cofactor.

It localises to the cytoplasm. It catalyses the reaction Endonucleolytic cleavage at a junction such as a reciprocal single-stranded crossover between two homologous DNA duplexes (Holliday junction).. In terms of biological role, the RuvA-RuvB-RuvC complex processes Holliday junction (HJ) DNA during genetic recombination and DNA repair. Endonuclease that resolves HJ intermediates. Cleaves cruciform DNA by making single-stranded nicks across the HJ at symmetrical positions within the homologous arms, yielding a 5'-phosphate and a 3'-hydroxyl group; requires a central core of homology in the junction. The consensus cleavage sequence is 5'-(A/T)TT(C/G)-3'. Cleavage occurs on the 3'-side of the TT dinucleotide at the point of strand exchange. HJ branch migration catalyzed by RuvA-RuvB allows RuvC to scan DNA until it finds its consensus sequence, where it cleaves and resolves the cruciform DNA. The chain is Crossover junction endodeoxyribonuclease RuvC from Sulfurovum sp. (strain NBC37-1).